Reading from the N-terminus, the 515-residue chain is 2-isopropylmalate synthase (515 aa).

The Pyruvate carboxyltransferase domain occupies 5–267 (VIIFDTTLRD…HTSLKNDEIH (263 aa)). Positions 14, 202, 204, and 238 each coordinate Mn(2+). Residues 392 to 515 (KLNYLSVQSG…EIKQNKITTV (124 aa)) form a regulatory domain region.

It belongs to the alpha-IPM synthase/homocitrate synthase family. LeuA type 1 subfamily. Homodimer. Mn(2+) serves as cofactor.

Its subcellular location is the cytoplasm. It catalyses the reaction 3-methyl-2-oxobutanoate + acetyl-CoA + H2O = (2S)-2-isopropylmalate + CoA + H(+). The protein operates within amino-acid biosynthesis; L-leucine biosynthesis; L-leucine from 3-methyl-2-oxobutanoate: step 1/4. Catalyzes the condensation of the acetyl group of acetyl-CoA with 3-methyl-2-oxobutanoate (2-ketoisovalerate) to form 3-carboxy-3-hydroxy-4-methylpentanoate (2-isopropylmalate). This is 2-isopropylmalate synthase from Aliivibrio salmonicida (strain LFI1238) (Vibrio salmonicida (strain LFI1238)).